Reading from the N-terminus, the 255-residue chain is 4-hydroxy-tetrahydrodipicolinate reductase (255 aa).

Residues 9–14 (GFKGKM), 89–91 (GTT), and 115–118 (APNF) each bind NAD(+). Histidine 145 serves as the catalytic Proton donor/acceptor. Histidine 146 lines the (S)-2,3,4,5-tetrahydrodipicolinate pocket. Catalysis depends on lysine 149, which acts as the Proton donor. 155–156 (GT) is a (S)-2,3,4,5-tetrahydrodipicolinate binding site.

Belongs to the DapB family.

It localises to the cytoplasm. It catalyses the reaction (S)-2,3,4,5-tetrahydrodipicolinate + NAD(+) + H2O = (2S,4S)-4-hydroxy-2,3,4,5-tetrahydrodipicolinate + NADH + H(+). The catalysed reaction is (S)-2,3,4,5-tetrahydrodipicolinate + NADP(+) + H2O = (2S,4S)-4-hydroxy-2,3,4,5-tetrahydrodipicolinate + NADPH + H(+). The protein operates within amino-acid biosynthesis; L-lysine biosynthesis via DAP pathway; (S)-tetrahydrodipicolinate from L-aspartate: step 4/4. Functionally, catalyzes the conversion of 4-hydroxy-tetrahydrodipicolinate (HTPA) to tetrahydrodipicolinate. This is 4-hydroxy-tetrahydrodipicolinate reductase from Streptococcus sanguinis (strain SK36).